The primary structure comprises 457 residues: tRNA modification GTPase MnmE (457 aa).

3 residues coordinate (6S)-5-formyl-5,6,7,8-tetrahydrofolate: Arg-25, Glu-87, and Arg-126. Residues 223-377 form the TrmE-type G domain; it reads GISTAIIGRP…IEERINQLFF (155 aa). K(+) is bound at residue Asn-233. GTP contacts are provided by residues 233 to 238, 252 to 258, and 277 to 280; these read NVGKSS, TDIAGTT, and DTAG. Ser-237 contacts Mg(2+). K(+)-binding residues include Thr-252, Ile-254, and Thr-257. Residue Thr-258 participates in Mg(2+) binding. A (6S)-5-formyl-5,6,7,8-tetrahydrofolate-binding site is contributed by Lys-457.

This sequence belongs to the TRAFAC class TrmE-Era-EngA-EngB-Septin-like GTPase superfamily. TrmE GTPase family. In terms of assembly, homodimer. Heterotetramer of two MnmE and two MnmG subunits. It depends on K(+) as a cofactor.

The protein resides in the cytoplasm. Exhibits a very high intrinsic GTPase hydrolysis rate. Involved in the addition of a carboxymethylaminomethyl (cmnm) group at the wobble position (U34) of certain tRNAs, forming tRNA-cmnm(5)s(2)U34. In Streptococcus gordonii (strain Challis / ATCC 35105 / BCRC 15272 / CH1 / DL1 / V288), this protein is tRNA modification GTPase MnmE.